Here is a 388-residue protein sequence, read N- to C-terminus: Splicing factor 3B subunit 4 (388 aa).

2 RRM domains span residues 13-91 (ATIY…KASA) and 100-179 (ANIF…YAFK). The interval 244–388 (QPPPLMGMAQ…GMIPPPPPPS (145 aa)) is disordered. Pro residues-rich tracts occupy residues 261–325 (PPVP…PSRF), 333–355 (MPPPPPPGMRYPGGMPPPPPPRY), and 362–388 (MYPPPPPSRPPAPPSGHGMIPPPPPPS).

It belongs to the SF3B4 family.

The protein resides in the nucleus. Functionally, subunit of the splicing factor SF3B required for 'A' complex assembly formed by the stable binding of U2 snRNP to the branchpoint sequence (BPS) in pre-mRNA. Sequence independent binding of SF3A/SF3B complex upstream of the branch site is essential, it may anchor U2 snRNP to the pre-mRNA. May also be involved in the assembly of the 'E' complex. SF3B4 has been found in complex 'B' and 'C' as well. Belongs also to the minor U12-dependent spliceosome, which is involved in the splicing of rare class of nuclear pre-mRNA intron. The protein is Splicing factor 3B subunit 4 (sap-49) of Caenorhabditis elegans.